The following is a 253-amino-acid chain: uncharacterized protein (253 aa).

A signal peptide spans 1-15 (MNRVILFHFHFFKNA).

This is an uncharacterized protein from Archaeoglobus fulgidus (strain ATCC 49558 / DSM 4304 / JCM 9628 / NBRC 100126 / VC-16).